A 489-amino-acid polypeptide reads, in one-letter code: Penton protein (489 aa).

Belongs to the adenoviridae penton family. Interacts with the fiber protein (via N-terminal tail region). Interacts with the capsid vertex protein; this interaction binds the penton base to neighboring peripentonal hexons.

It localises to the virion. Its subcellular location is the host nucleus. Functionally, major capsid protein that self-associates to form penton base pentamers, each in the shape of a pentagon, situated at the 12 vertices of the pseudo T=25 capsid. Involved in virus secondary attachment to host cell after initial attachment by the fiber protein, and in endocytosis of virions. As the virus enters the host cell, penton proteins are shed concomitant with virion acidification in the endosome. This is Penton protein from Murine adenovirus A serotype 1 (MAdV-1).